We begin with the raw amino-acid sequence, 166 residues long: uncharacterized protein (166 aa).

Residues 34–54 traverse the membrane as a helical segment; the sequence is FWGKVLVLTFGIICVVFVIFM. Disordered regions lie at residues 73 to 93 and 123 to 166; these read QRTQ…SQQF and TSTP…NDEV.

The protein localises to the vacuole membrane. This is an uncharacterized protein from Schizosaccharomyces pombe (strain 972 / ATCC 24843) (Fission yeast).